A 797-amino-acid polypeptide reads, in one-letter code: Protocadherin beta-11 (797 aa).

An N-terminal signal peptide occupies residues 1-26 (MENQGTRTQQIRQVLLLFVLLGMSQA). Residues 27–690 (GSETWSFSVA…AQADSLTVYL (664 aa)) lie on the Extracellular side of the membrane. Cadherin domains are found at residues 35-133 (VAEE…SPIF), 138-242 (MLLE…SPEF), 247-347 (YEVK…APEI), 352-451 (ITSP…APTF), and 456-561 (YTLF…SPFV). 4 N-linked (GlcNAc...) asparagine glycosylation sites follow: Asn-418, Asn-436, Asn-487, and Asn-567. A Cadherin 6 domain is found at 568 to 671 (GSAPCTELVP…LVDGFSQPYL (104 aa)). The chain crosses the membrane as a helical span at residues 691 to 711 (VVALASVSSLFLFSVLLFVAV). Residues 712-797 (RLCRRSRAAS…TFRNSFGFNF (86 aa)) are Cytoplasmic-facing.

Its subcellular location is the cell membrane. In terms of biological role, potential calcium-dependent cell-adhesion protein. May be involved in the establishment and maintenance of specific neuronal connections in the brain. The protein is Protocadherin beta-11 (PCDHB11) of Homo sapiens (Human).